We begin with the raw amino-acid sequence, 76 residues long: Small ribosomal subunit protein eS17 (76 aa).

The protein belongs to the eukaryotic ribosomal protein eS17 family.

The sequence is that of Small ribosomal subunit protein eS17 from Metallosphaera sedula (strain ATCC 51363 / DSM 5348 / JCM 9185 / NBRC 15509 / TH2).